The chain runs to 339 residues: MKNTADITVLGAGSYGTALAISLASNGHRTMLWGHEPEHIENLKNDKSNEAFLPGIPLPDLLIPEADLATALAASNNVLVVVPSHVFGLVLTQAKPLLRKDSRIVWATKGLEPETGRLIQDVAREAIGDEFPLAVLSGPTFAKELAAGMPTAISIAGTDPQFTKDLVELLHSPKRLRVYANDDFIGLQLGGAVKNVIAIGAGLSDGIGFGANARTALITRGLVELTRLGEAMGAQASTFMGMAGLGDLVLTCTDNQSRNRRFGLALGKGSDVETAQDEIGQVVEGYRNTKEVYTLAKRLGVEMPITEQVYQVLYKGKSPVDAAKELLSREKKSETSSAE.

NADPH contacts are provided by S14, Y15, H35, and K109. Residues K109, G138, and T140 each contribute to the sn-glycerol 3-phosphate site. NADPH is bound at residue A142. Sn-glycerol 3-phosphate-binding residues include K194, D247, S257, R258, and N259. The active-site Proton acceptor is the K194. R258 contacts NADPH. Positions 282 and 284 each coordinate NADPH.

Belongs to the NAD-dependent glycerol-3-phosphate dehydrogenase family.

The protein localises to the cytoplasm. The enzyme catalyses sn-glycerol 3-phosphate + NAD(+) = dihydroxyacetone phosphate + NADH + H(+). It catalyses the reaction sn-glycerol 3-phosphate + NADP(+) = dihydroxyacetone phosphate + NADPH + H(+). It functions in the pathway membrane lipid metabolism; glycerophospholipid metabolism. Catalyzes the reduction of the glycolytic intermediate dihydroxyacetone phosphate (DHAP) to sn-glycerol 3-phosphate (G3P), the key precursor for phospholipid synthesis. The protein is Glycerol-3-phosphate dehydrogenase [NAD(P)+] of Shewanella pealeana (strain ATCC 700345 / ANG-SQ1).